A 414-amino-acid polypeptide reads, in one-letter code: Serine/threonine transporter SstT (414 aa).

The Cytoplasmic segment spans residues 2-15 (TTQRSPGLFRRLAH). A helical membrane pass occupies residues 16–36 (GSLVKQILVGLVLGILLAWIS). The Periplasmic portion of the chain corresponds to 37–45 (KPAAEAVGL). The chain crosses the membrane as a helical span at residues 46–66 (LGTLFVGALKAVAPILVLMLV). Residues 67–83 (MASIANHQHGQKTNIRP) are Cytoplasmic-facing. The helical transmembrane segment at 84–104 (ILFLYLLGTFSAALAAVVFSF) threads the bilayer. Over 105-142 (AFPSTLHLSSSAGDISPPSGIVEVMRGLVMSMVSNPID) the chain is Periplasmic. The chain crosses the membrane as a helical span at residues 143 to 163 (ALLKGNYIGILVWAIGLGFAL). Residues 164 to 179 (RHGNETTKNLVNDLSN) lie on the Cytoplasmic side of the membrane. A helical membrane pass occupies residues 180 to 200 (AVTFMVKLVIRFAPIGIFGLV). Residues 201 to 217 (SSTLATTGFSTLWGYAQ) are Periplasmic-facing. The helical transmembrane segment at 218–238 (LLVVLVGCMLLVALVVNPLLV) threads the bilayer. Residues 239 to 299 (WWKIRRNPFP…VSIPLGATIN (61 aa)) lie on the Cytoplasmic side of the membrane. The helical transmembrane segment at 300-320 (MAGAAITITVLTLAAVNTLGI) threads the bilayer. Residues 321–331 (PVDLPTALLLS) lie on the Periplasmic side of the membrane. Residues 332–352 (VVASLCACGASGVAGGSLLLI) traverse the membrane as a helical segment. Topologically, residues 353–414 (PLACNMFGIS…DRLANSALRN (62 aa)) are cytoplasmic.

The protein belongs to the dicarboxylate/amino acid:cation symporter (DAACS) (TC 2.A.23) family.

The protein resides in the cell inner membrane. It carries out the reaction L-serine(in) + Na(+)(in) = L-serine(out) + Na(+)(out). The catalysed reaction is L-threonine(in) + Na(+)(in) = L-threonine(out) + Na(+)(out). In terms of biological role, involved in the import of serine and threonine into the cell, with the concomitant import of sodium (symport system). The chain is Serine/threonine transporter SstT from Shigella boydii serotype 4 (strain Sb227).